The chain runs to 160 residues: Large ribosomal subunit protein uL22c (160 aa).

It belongs to the universal ribosomal protein uL22 family. As to quaternary structure, part of the 50S ribosomal subunit.

It is found in the plastid. The protein localises to the chloroplast. This protein binds specifically to 23S rRNA. Its function is as follows. The globular domain of the protein is located near the polypeptide exit tunnel on the outside of the subunit, while an extended beta-hairpin is found that lines the wall of the exit tunnel in the center of the 70S ribosome. The chain is Large ribosomal subunit protein uL22c (rpl22) from Capsella bursa-pastoris (Shepherd's purse).